Consider the following 219-residue polypeptide: MPLIYVLDTSAVTDPRLREIFGVKTLDGVVREYARLLIRSHIVLGAEFYTTPSTALELRSFLERNNVSREAIDMLMGAITIRSPDLYTTRIPAIIMSDWIHDMLIRITKGLRVAEDSVRRAARRGYDYGVAQDKKGFEESVAETIHELREKYREATRKGVIDTRVDFDLVVLAHEINGELVTNDTGIMKLCMQIGVKYIEPPRFINKLFLLLRERTGRV.

This sequence belongs to the HARP family.

The enzyme catalyses Endonucleolytic cleavage of RNA, removing 5'-extranucleotides from tRNA precursor.. Its function is as follows. RNA-free RNase P that catalyzes the removal of the 5'-leader sequence from pre-tRNA to produce the mature 5'-terminus. This is RNA-free ribonuclease P from Staphylothermus marinus (strain ATCC 43588 / DSM 3639 / JCM 9404 / F1).